The chain runs to 338 residues: Phenylalanine--tRNA ligase alpha subunit (338 aa).

Glu-253 lines the Mg(2+) pocket.

Belongs to the class-II aminoacyl-tRNA synthetase family. Phe-tRNA synthetase alpha subunit type 1 subfamily. As to quaternary structure, tetramer of two alpha and two beta subunits. Mg(2+) is required as a cofactor.

The protein resides in the cytoplasm. The enzyme catalyses tRNA(Phe) + L-phenylalanine + ATP = L-phenylalanyl-tRNA(Phe) + AMP + diphosphate + H(+). In Trichlorobacter lovleyi (strain ATCC BAA-1151 / DSM 17278 / SZ) (Geobacter lovleyi), this protein is Phenylalanine--tRNA ligase alpha subunit.